The following is a 229-amino-acid chain: Uracil-DNA glycosylase (229 aa).

Asp65 functions as the Proton acceptor in the catalytic mechanism.

It belongs to the uracil-DNA glycosylase (UDG) superfamily. UNG family.

The protein resides in the cytoplasm. The enzyme catalyses Hydrolyzes single-stranded DNA or mismatched double-stranded DNA and polynucleotides, releasing free uracil.. Functionally, excises uracil residues from the DNA which can arise as a result of misincorporation of dUMP residues by DNA polymerase or due to deamination of cytosine. This chain is Uracil-DNA glycosylase, found in Latilactobacillus sakei subsp. sakei (strain 23K) (Lactobacillus sakei subsp. sakei).